The sequence spans 887 residues: Integrator complex subunit 6 (887 aa).

In terms of domain architecture, VWFA spans 3–227 (ILLFLIDTSA…QCLESLVQKV (225 aa)). Positions 626 to 633 (MMIDEADE) match the Inhibitory loop motif. Phosphoserine is present on S804.

The protein belongs to the Integrator subunit 6 family. As to quaternary structure, component of the Integrator complex, composed of core subunits INTS1, INTS2, INTS3, INTS4, INTS5, INTS6, INTS7, INTS8, INTS9/RC74, INTS10, INTS11/CPSF3L, INTS12, INTS13, INTS14 and INTS15. The core complex associates with protein phosphatase 2A subunits PPP2CA and PPP2R1A, to form the Integrator-PP2A (INTAC) complex. In terms of tissue distribution, widely expressed. Expressed in heart, brain, placenta, lung, liver, skeletal muscle, kidney and pancreas.

It localises to the nucleus. The protein resides in the chromosome. Functionally, component of the integrator complex, a multiprotein complex that terminates RNA polymerase II (Pol II) transcription in the promoter-proximal region of genes. The integrator complex provides a quality checkpoint during transcription elongation by driving premature transcription termination of transcripts that are unfavorably configured for transcriptional elongation: the complex terminates transcription by (1) catalyzing dephosphorylation of the C-terminal domain (CTD) of Pol II subunit POLR2A and SUPT5H/SPT5, (2) degrading the exiting nascent RNA transcript via endonuclease activity and (3) promoting the release of Pol II from bound DNA. The integrator complex is also involved in terminating the synthesis of non-coding Pol II transcripts, such as enhancer RNAs (eRNAs), small nuclear RNAs (snRNAs), telomerase RNAs and long non-coding RNAs (lncRNAs). Within the integrator complex, INTS6 acts as a molecular adapter that promotes assembly of protein phosphatase 2A (PP2A) subunits to the integrator core complex, promoting recruitment of PP2A to transcription pause-release checkpoint. Mediates recruitment of cytoplasmic dynein to the nuclear envelope, probably as component of the integrator complex. May have a tumor suppressor role; an ectopic expression suppressing tumor cell growth. This is Integrator complex subunit 6 from Homo sapiens (Human).